The primary structure comprises 308 residues: Ribosomal RNA small subunit methyltransferase H (308 aa).

S-adenosyl-L-methionine contacts are provided by residues 35 to 37, D54, F80, D101, and Q108; that span reads GGH.

The protein belongs to the methyltransferase superfamily. RsmH family.

Its subcellular location is the cytoplasm. It catalyses the reaction cytidine(1402) in 16S rRNA + S-adenosyl-L-methionine = N(4)-methylcytidine(1402) in 16S rRNA + S-adenosyl-L-homocysteine + H(+). Functionally, specifically methylates the N4 position of cytidine in position 1402 (C1402) of 16S rRNA. This chain is Ribosomal RNA small subunit methyltransferase H, found in Mycoplasma pneumoniae (strain ATCC 29342 / M129 / Subtype 1) (Mycoplasmoides pneumoniae).